The primary structure comprises 170 residues: Co-chaperone protein HscB homolog (170 aa).

Residues 5–79 (DHFSLFGLPA…RARYLCEQAG (75 aa)) enclose the J domain.

Belongs to the HscB family. As to quaternary structure, interacts with HscA and stimulates its ATPase activity.

Co-chaperone involved in the maturation of iron-sulfur cluster-containing proteins. Seems to help targeting proteins to be folded toward HscA. This is Co-chaperone protein HscB homolog from Bordetella petrii (strain ATCC BAA-461 / DSM 12804 / CCUG 43448).